We begin with the raw amino-acid sequence, 249 residues long: ATP synthase subunit a (249 aa).

Helical transmembrane passes span 30–50 (QSPV…YVGM), 86–106 (FFPF…LGLL), 115–135 (HIAV…IVSL), 142–162 (FFAH…LVPI), 191–211 (MFAA…VLAV), and 218–238 (VALM…FAIL).

The protein belongs to the ATPase A chain family. In terms of assembly, F-type ATPases have 2 components, CF(1) - the catalytic core - and CF(0) - the membrane proton channel. CF(1) has five subunits: alpha(3), beta(3), gamma(1), delta(1), epsilon(1). CF(0) has three main subunits: a(1), b(2) and c(9-12). The alpha and beta chains form an alternating ring which encloses part of the gamma chain. CF(1) is attached to CF(0) by a central stalk formed by the gamma and epsilon chains, while a peripheral stalk is formed by the delta and b chains.

It is found in the cell inner membrane. Its function is as follows. Key component of the proton channel; it plays a direct role in the translocation of protons across the membrane. This chain is ATP synthase subunit a, found in Gluconacetobacter diazotrophicus (strain ATCC 49037 / DSM 5601 / CCUG 37298 / CIP 103539 / LMG 7603 / PAl5).